A 179-amino-acid chain; its full sequence is Small ribosomal subunit protein uS5 (179 aa).

An S5 DRBM domain is found at 13–76 (LDERVVLINR…EAAKRNLIRV (64 aa)). The segment at 160–179 (DMTPQELNARRMRRETTEAA) is disordered.

Belongs to the universal ribosomal protein uS5 family. In terms of assembly, part of the 30S ribosomal subunit. Contacts proteins S4 and S8.

In terms of biological role, with S4 and S12 plays an important role in translational accuracy. Functionally, located at the back of the 30S subunit body where it stabilizes the conformation of the head with respect to the body. This chain is Small ribosomal subunit protein uS5, found in Chloroflexus aggregans (strain MD-66 / DSM 9485).